The following is a 1119-amino-acid chain: Nuclear matrix constituent protein 1 (1119 aa).

Coiled-coil stretches lie at residues 140-226 and 328-488; these read LAEL…LYQQ and LQNR…LDER. 4 disordered regions span residues 846 to 884, 903 to 974, 989 to 1015, and 1046 to 1109; these read LDVE…AEEA, LASA…PTGR, NGAL…EIPD, and GINA…EVSM. Basic residues-rich tracts occupy residues 859-876 and 920-929; these read GNRK…RKRS and KRTRNSRKRN. Residues 1075 to 1085 are compositionally biased toward polar residues; that stretch reads TPEQSRGYQNQ.

The protein belongs to the CRWN family.

Its subcellular location is the nucleus matrix. The protein resides in the nucleus lamina. Its function is as follows. Architectural component of nuclear structure that plays different roles in controlling nuclear size and morphology. This Daucus carota subsp. sativus (Carrot) protein is Nuclear matrix constituent protein 1.